Reading from the N-terminus, the 490-residue chain is Betaine aldehyde dehydrogenase (490 aa).

D93 is a K(+) binding site. G150 to W152 is a binding site for NAD(+). K162 acts as the Charge relay system in catalysis. K176 to E179 serves as a coordination point for NAD(+). K(+) is bound at residue V180. NAD(+) is bound at residue G230–T233. Residue L246 coordinates K(+). E252 (proton acceptor) is an active-site residue. Residues G254, C286, and E387 each coordinate NAD(+). C286 acts as the Nucleophile in catalysis. Residue C286 is modified to Cysteine sulfenic acid (-SOH). Residues K457 and G460 each contribute to the K(+) site. The Charge relay system role is filled by E464.

It belongs to the aldehyde dehydrogenase family. In terms of assembly, dimer of dimers. The cofactor is K(+).

The enzyme catalyses betaine aldehyde + NAD(+) + H2O = glycine betaine + NADH + 2 H(+). It functions in the pathway amine and polyamine biosynthesis; betaine biosynthesis via choline pathway; betaine from betaine aldehyde: step 1/1. Its function is as follows. Involved in the biosynthesis of the osmoprotectant glycine betaine. Catalyzes the irreversible oxidation of betaine aldehyde to the corresponding acid. In Serratia proteamaculans (strain 568), this protein is Betaine aldehyde dehydrogenase.